A 396-amino-acid polypeptide reads, in one-letter code: Probable mannan endo-1,4-beta-mannosidase A-2 (396 aa).

An N-terminal signal peptide occupies residues Met-1–Ala-21. Trp-99 contacts substrate. The N-linked (GlcNAc...) asparagine glycan is linked to Asn-120. Residue Asn-212 participates in substrate binding. The active-site Proton donor is Glu-213. Asn-270 is a glycosylation site (N-linked (GlcNAc...) asparagine). Tyr-288 lines the substrate pocket. The Nucleophile role is filled by Glu-321. Trp-351 provides a ligand contact to substrate.

The protein belongs to the glycosyl hydrolase 5 (cellulase A) family.

It is found in the secreted. It catalyses the reaction Random hydrolysis of (1-&gt;4)-beta-D-mannosidic linkages in mannans, galactomannans and glucomannans.. Its function is as follows. Endo-1,4-mannanase, a crucial enzyme for depolymerization of seed galactomannans and wood galactoglucomannans. The sequence is that of Probable mannan endo-1,4-beta-mannosidase A-2 (manA-2) from Aspergillus terreus (strain NIH 2624 / FGSC A1156).